The primary structure comprises 597 residues: Golgin subfamily A member 8C (597 aa).

Disordered stretches follow at residues 1 to 80 (MAEE…VPDS) and 96 to 120 (KQQK…QKAE). The span at 38–50 (TNGSIHETATSGG) shows a compositional bias: polar residues. Over residues 53 to 70 (SPGDSSSTSSSLHAPQSP) the composition is skewed to low complexity. Coiled-coil stretches lie at residues 81 to 141 (RSVK…NTDL), 199 to 255 (EWKL…SQEV), and 296 to 394 (SEVE…GKRL). Basic and acidic residues predominate over residues 100-120 (KQVEHQLEEEKKANNEKQKAE). Disordered regions lie at residues 390 to 422 (LGKR…SGFM), 457 to 498 (PITK…GVAA), and 549 to 576 (PVQG…QEHP). Gly residues predominate over residues 470-483 (PGGGHHQAGPGQGG). A compositionally biased stretch (basic and acidic residues) spans 553–563 (ETREGSPHDKP).

Belongs to the GOLGA8 family.

The chain is Golgin subfamily A member 8C (GOLGA8CP) from Homo sapiens (Human).